The sequence spans 400 residues: ELAV-like protein 4 (400 aa).

A disordered region spans residues 12–48; it reads TMEPQVSNGPTSNTSNGPSSNSRNCPSPMQTGAATDD. Residues 18-33 are compositionally biased toward low complexity; the sequence is SNGPTSNTSNGPSSNS. Residues 34–44 are compositionally biased toward polar residues; that stretch reads RNCPSPMQTGA. RRM domains lie at 51-158, 166-246, and 317-395; these read TNLI…YARP, ANLY…FANN, and WCIF…FKTN.

The protein belongs to the RRM elav family.

The protein resides in the cytoplasm. The protein localises to the perikaryon. Its subcellular location is the cell projection. It is found in the axon. It localises to the dendrite. The protein resides in the growth cone. Functionally, RNA-binding protein that is involved in the post-transcriptional regulation of mRNAs. Plays a role in the regulation of mRNA stability, alternative splicing and translation. Binds to AU-rich element (ARE) sequences in the 3' untranslated region (3'UTR) of target mRNAs. Mainly plays a role in neuron-specific RNA processing. This chain is ELAV-like protein 4 (elavl4), found in Xenopus tropicalis (Western clawed frog).